The following is a 166-amino-acid chain: MSSEITEGDLQKFHDEHFNAKAVNLWNVAFAQNDRGGNSESANVEYTQSVERYPDGTIRTLTDEQILWFRESEKRELMWKKEKEQLLKEKELRQKALDKERMVSSKPETNPKTPISLKELKDIEIYQNQFHYSAYEILEEEKILDNIFRKFTALPIKYWPATPIRG.

Residues 1-58 (MSSEITEGDLQKFHDEHFNAKAVNLWNVAFAQNDRGGNSESANVEYTQSVERYPDGTI) form a may interact with smn1 region.

In terms of assembly, part of the core SMN complex at least composed of smn1, yip11/gem2, gem6, gem7 and gem8. Interacts with smn1; the interaction is direct. Interacts with gem7; the interaction is direct.

The protein resides in the cytoplasm. The protein localises to the nucleus. Functionally, the SMN complex catalyzes the assembly of small nuclear ribonucleoproteins (snRNPs), the building blocks of the spliceosome, and thereby plays an important role in the splicing of cellular pre-mRNAs. Most spliceosomal snRNPs contain a common set of Sm proteins SNRPB, SNRPD1, SNRPD2, SNRPD3, SNRPE, SNRPF and SNRPG that assemble in a heptameric protein ring on the Sm site of the small nuclear RNA to form the core snRNP (Sm core). In the cytosol, the Sm proteins SNRPD1, SNRPD2, SNRPE, SNRPF and SNRPG are trapped in an inactive 6S pICln-Sm complex by the chaperone CLNS1A that controls the assembly of the core snRNP. To assemble core snRNPs, the SMN complex accepts the trapped 5Sm proteins from CLNS1A forming an intermediate. Binding of snRNA inside 5Sm triggers eviction of the SMN complex, thereby allowing binding of SNRPD3 and SNRPB to complete assembly of the core snRNP. This is an uncharacterized protein from Schizosaccharomyces pombe (strain 972 / ATCC 24843) (Fission yeast).